We begin with the raw amino-acid sequence, 59 residues long: Large ribosomal subunit protein bL33 (59 aa).

This sequence belongs to the bacterial ribosomal protein bL33 family.

The protein is Large ribosomal subunit protein bL33 of Borrelia turicatae (strain 91E135).